Consider the following 283-residue polypeptide: 4-diphosphocytidyl-2-C-methyl-D-erythritol kinase (283 aa).

K10 is a catalytic residue. Residue 95-105 participates in ATP binding; it reads PVAAGLGGGSS. D137 is an active-site residue.

This sequence belongs to the GHMP kinase family. IspE subfamily.

It carries out the reaction 4-CDP-2-C-methyl-D-erythritol + ATP = 4-CDP-2-C-methyl-D-erythritol 2-phosphate + ADP + H(+). It participates in isoprenoid biosynthesis; isopentenyl diphosphate biosynthesis via DXP pathway; isopentenyl diphosphate from 1-deoxy-D-xylulose 5-phosphate: step 3/6. Catalyzes the phosphorylation of the position 2 hydroxy group of 4-diphosphocytidyl-2C-methyl-D-erythritol. This chain is 4-diphosphocytidyl-2-C-methyl-D-erythritol kinase, found in Limosilactobacillus fermentum (strain NBRC 3956 / LMG 18251) (Lactobacillus fermentum).